A 397-amino-acid polypeptide reads, in one-letter code: Odorant receptor 2a (397 aa).

Over 1 to 38 the chain is Cytoplasmic; it reads MEKQEDFKLNTHSAVYYHWRVWELTGLMRPPGVSSLLY. A helical transmembrane segment spans residues 39–59; that stretch reads VVYSITVNLVVTVLFPLSLLA. The Extracellular portion of the chain corresponds to 60–72; the sequence is RLLFTTNMAGLCE. A helical membrane pass occupies residues 73–92; sequence NLTITITDIVANLKFANVYM. At 93-131 the chain is on the cytoplasmic side; the sequence is VRKQLHEIRSLLRLMDARARLVGDPEEISALRKEVNIAQ. A helical membrane pass occupies residues 132-150; that stretch reads GTFRTFASIFVFGTTLSCV. Over 151–176 the chain is Extracellular; it reads RVVVRPDRELLYPAWFGVDWMHSTRN. The chain crosses the membrane as a helical span at residues 177 to 197; sequence YVLINIYQLFGLIVQAIQNCA. The Cytoplasmic portion of the chain corresponds to 198-272; it reads SDSYPPAFLC…IIQRVLSVPC (75 aa). The chain crosses the membrane as a helical span at residues 273 to 293; that stretch reads MAQFVCSAAVQCTVAMHFLYV. At 294 to 301 the chain is on the extracellular side; that stretch reads ADDHDHTA. The chain crosses the membrane as a helical span at residues 302-322; that stretch reads MIISIVFFSAVTLEVFVICYF. At 323-363 the chain is on the cytoplasmic side; sequence GDRMRTQSEALCDAFYDCNWIEQLPKFKRELLFTLARTQRP. A helical transmembrane segment spans residues 364–383; the sequence is SLIYAGNYIALSLETFEQVM. Over 384–397 the chain is Extracellular; the sequence is RFTYSVFTLLLRAK.

The protein belongs to the insect chemoreceptor superfamily. Heteromeric odorant receptor channel (TC 1.A.69) family. Or2a subfamily. Interacts with Orco. Complexes exist early in the endomembrane system in olfactory sensory neurons (OSNs), coupling these complexes to the conserved ciliary trafficking pathway. As to expression, expressed in 20 sensory neurons on the distal edge of the antenna.

The protein localises to the cell membrane. Its function is as follows. Odorant receptor which mediates acceptance or avoidance behavior, depending on its substrates. The odorant receptor repertoire encodes a large collection of odor stimuli that vary widely in identity, intensity, and duration. May form a complex with Orco to form odorant-sensing units, providing sensitive and prolonged odorant signaling and calcium permeability. This Drosophila melanogaster (Fruit fly) protein is Odorant receptor 2a (Or2a).